We begin with the raw amino-acid sequence, 439 residues long: Xaa-Pro dipeptidase (439 aa).

Positions 244, 255, 335, 380, and 419 each coordinate Mn(2+).

It belongs to the peptidase M24B family. Bacterial-type prolidase subfamily. The cofactor is Mn(2+).

It catalyses the reaction Xaa-L-Pro dipeptide + H2O = an L-alpha-amino acid + L-proline. Splits dipeptides with a prolyl residue in the C-terminal position. This chain is Xaa-Pro dipeptidase, found in Shewanella woodyi (strain ATCC 51908 / MS32).